Here is a 295-residue protein sequence, read N- to C-terminus: Pyridoxal 5'-phosphate synthase subunit PdxS (295 aa).

D25 contributes to the D-ribose 5-phosphate binding site. The Schiff-base intermediate with D-ribose 5-phosphate role is filled by K82. Position 154 (G154) interacts with D-ribose 5-phosphate. R166 lines the D-glyceraldehyde 3-phosphate pocket. D-ribose 5-phosphate-binding positions include G215 and 236 to 237 (GS).

It belongs to the PdxS/SNZ family. In the presence of PdxT, forms a dodecamer of heterodimers.

The catalysed reaction is aldehydo-D-ribose 5-phosphate + D-glyceraldehyde 3-phosphate + L-glutamine = pyridoxal 5'-phosphate + L-glutamate + phosphate + 3 H2O + H(+). It functions in the pathway cofactor biosynthesis; pyridoxal 5'-phosphate biosynthesis. Functionally, catalyzes the formation of pyridoxal 5'-phosphate from ribose 5-phosphate (RBP), glyceraldehyde 3-phosphate (G3P) and ammonia. The ammonia is provided by the PdxT subunit. Can also use ribulose 5-phosphate and dihydroxyacetone phosphate as substrates, resulting from enzyme-catalyzed isomerization of RBP and G3P, respectively. The polypeptide is Pyridoxal 5'-phosphate synthase subunit PdxS (Natranaerobius thermophilus (strain ATCC BAA-1301 / DSM 18059 / JW/NM-WN-LF)).